A 121-amino-acid chain; its full sequence is Flagellar protein FliT (121 aa).

Residues 1-50 (MNHAPHLYFAWQQLVDKSQLMLRLATEEQWDELIASEMAYVNAVQEIAHL) are required for homodimerization. Positions 60–98 (MQEQLRPMLRLILDNESKVKQLLQIRMDELAKLVGQSSV) are fliD binding.

Belongs to the FliT family. As to quaternary structure, homodimer. Interacts with FliD and FlhC.

It is found in the cytoplasm. It localises to the cytosol. Dual-function protein that regulates the transcription of class 2 flagellar operons and that also acts as an export chaperone for the filament-capping protein FliD. As a transcriptional regulator, acts as an anti-FlhDC factor; it directly binds FlhC, thus inhibiting the binding of the FlhC/FlhD complex to class 2 promoters, resulting in decreased expression of class 2 flagellar operons. As a chaperone, effects FliD transition to the membrane by preventing its premature polymerization, and by directing it to the export apparatus. This Shigella sonnei (strain Ss046) protein is Flagellar protein FliT.